The chain runs to 400 residues: Acetyl-CoA decarbonylase/synthase complex subunit delta (400 aa).

It belongs to the CdhD family. Heterodimer of delta and gamma chains. The ACDS complex is made up of alpha, epsilon, beta, gamma and delta chains with a probable stoichiometry of (alpha(2)epsilon(2))(4)-beta(8)-(gamma(1)delta(1))(8).

Functionally, part of a complex that catalyzes the reversible cleavage of acetyl-CoA, allowing autotrophic growth from CO(2). Probably maintains the overall quaternary structure of the ACDS complex. This is Acetyl-CoA decarbonylase/synthase complex subunit delta from Methanopyrus kandleri (strain AV19 / DSM 6324 / JCM 9639 / NBRC 100938).